We begin with the raw amino-acid sequence, 56 residues long: Large ribosomal subunit protein bL33 (56 aa).

Belongs to the bacterial ribosomal protein bL33 family.

In Halorhodospira halophila (strain DSM 244 / SL1) (Ectothiorhodospira halophila (strain DSM 244 / SL1)), this protein is Large ribosomal subunit protein bL33.